Reading from the N-terminus, the 79-residue chain is Calcium/calmodulin-dependent protein kinase II inhibitor 2 (79 aa).

A disordered region spans residues 1–21 (MSEILPYGEDKMGRFGADPEG). The interval 43-69 (KRPPKLGQIGRAKRVVIEDDRIDDVLK) is inhibitory domain.

It belongs to the CAMK2N family. As to quaternary structure, interacts with CAMK2A and CAMK2B in the presence of Ca(2+)/calmodulin or after autophosphorylation.

It is found in the nucleus. Its subcellular location is the cytoplasm. The protein localises to the cytosol. The protein resides in the synapse. Potent and specific cellular inhibitor of CaM-kinase II (CAMK2). Traps Ca(2+)/calmodulin on CAMK2. In Mus musculus (Mouse), this protein is Calcium/calmodulin-dependent protein kinase II inhibitor 2 (Camk2n2).